The sequence spans 521 residues: Glutamyl-tRNA(Gln) amidotransferase subunit B, mitochondrial (521 aa).

Residues 1-22 (MIALLRWGIARPSAPLRWSRCF) constitute a mitochondrion transit peptide.

It belongs to the GatB/GatE family. GatB subfamily. In terms of assembly, subunit of the heterotrimeric GatCAB amidotransferase (AdT) complex, composed of A, B and C subunits.

It localises to the mitochondrion. The catalysed reaction is L-glutamyl-tRNA(Gln) + L-glutamine + ATP + H2O = L-glutaminyl-tRNA(Gln) + L-glutamate + ADP + phosphate + H(+). Functionally, allows the formation of correctly charged Gln-tRNA(Gln) through the transamidation of misacylated Glu-tRNA(Gln) in the mitochondria. The reaction takes place in the presence of glutamine and ATP through an activated gamma-phospho-Glu-tRNA(Gln). The sequence is that of Glutamyl-tRNA(Gln) amidotransferase subunit B, mitochondrial from Cryptococcus neoformans var. neoformans serotype D (strain JEC21 / ATCC MYA-565) (Filobasidiella neoformans).